Here is a 716-residue protein sequence, read N- to C-terminus: MSLHTGWPRTVNSSFLKKHRSSLCTCQHTSSVLPRSFSTTPDRHVQQSADFSSTSRSYDRLGRRAREKLLDREFFLSLLSSATTKREAKSYLARLKAQHPKSPDANKPEPEKSATAPTLPSGVNLGSFYGASRSVYESPVFRQGPSPSAPPSLEPVERLHLALVRLSTPQSLDDNIIDGVAKTLSQLNRLGLTCCVVVDPGTEGVASALRQVAIEQADRLAVAIQKQPDSKSLRLDSVFSIDPSRPGLPQVFSRKALLNPLRHGHTVILTPIAYTEDVPRAIIVPANDAVIALTKELAGLASIPDPDEDPMVTAERIGRLQKEVSLDRVILLDPLGGIPAFNRRQPSHVFINMEQEYDDIENELLQAREMVPATETSLLKAGPNSVADNNPISKFVHAEVVPVPSGSTPELKTAVPQRSAIEGHLENLRVAQKALAMLPAASSGIITSPFEVASSAQTSPTSEFSAVGTRRQRNPLIHNLLTDKPLLSSSLPMSRRGPTNNGQGAVYPVTSHTTFVKRGMPLTMLPNPWTEPWTPQSRPRLKLDDPSIDLPRLVHLIEDSFDRKLDVQDYLNRVNDRLAGLIIAGEYEGGAILTWELPPGVEDDGSEASNARMVPYLDKFAVLKRSQGAGGVADIVFNAMVRSCFPNGVCWRSRKNNPVNKWYFERSLGTWKLSDTNWTMFWTTPGLVEDSQKFRDYEAVCRSIQPSWADDTGVVD.

Residues 1 to 44 (MSLHTGWPRTVNSSFLKKHRSSLCTCQHTSSVLPRSFSTTPDRH) constitute a mitochondrion transit peptide. A compositionally biased stretch (polar residues) spans 37-56 (FSTTPDRHVQQSADFSSTSR). 2 disordered regions span residues 37–58 (FSTTPDRHVQQSADFSSTSRSY) and 96–121 (KAQHPKSPDANKPEPEKSATAPTLPS). Residues 101 to 112 (KSPDANKPEPEK) are compositionally biased toward basic and acidic residues. The region spanning 537-706 (SRPRLKLDDP…YEAVCRSIQP (170 aa)) is the N-acetyltransferase domain.

The protein belongs to the acetyltransferase family.

The protein localises to the mitochondrion. The catalysed reaction is L-glutamate + acetyl-CoA = N-acetyl-L-glutamate + CoA + H(+). It participates in amino-acid biosynthesis; L-arginine biosynthesis; N(2)-acetyl-L-ornithine from L-glutamate: step 1/4. In terms of biological role, N-acetylglutamate synthase involved in arginine biosynthesis. The sequence is that of Amino-acid acetyltransferase, mitochondrial (arg2) from Aspergillus fumigatus (strain CBS 144.89 / FGSC A1163 / CEA10) (Neosartorya fumigata).